We begin with the raw amino-acid sequence, 196 residues long: Glycerol-3-phosphate acyltransferase 2 (196 aa).

5 helical membrane-spanning segments follow: residues 2 to 22 (GWWL…SYLI), 52 to 72 (VGGI…FITI), 80 to 100 (IVSL…FMKF), 112 to 132 (IIFC…LVIV), and 137 to 156 (YASL…GYLL).

The protein belongs to the PlsY family. Probably interacts with PlsX.

Its subcellular location is the cell inner membrane. It catalyses the reaction an acyl phosphate + sn-glycerol 3-phosphate = a 1-acyl-sn-glycero-3-phosphate + phosphate. It functions in the pathway lipid metabolism; phospholipid metabolism. Catalyzes the transfer of an acyl group from acyl-phosphate (acyl-PO(4)) to glycerol-3-phosphate (G3P) to form lysophosphatidic acid (LPA). This enzyme utilizes acyl-phosphate as fatty acyl donor, but not acyl-CoA or acyl-ACP. This Thermotoga maritima (strain ATCC 43589 / DSM 3109 / JCM 10099 / NBRC 100826 / MSB8) protein is Glycerol-3-phosphate acyltransferase 2.